The chain runs to 284 residues: Pantothenate synthetase (284 aa).

ATP is bound at residue 30–37 (MGNLHQGH). Histidine 37 acts as the Proton donor in catalysis. Glutamine 61 contributes to the (R)-pantoate binding site. Residue glutamine 61 participates in beta-alanine binding. Residue 149 to 152 (GQKD) coordinates ATP. Glutamine 155 contacts (R)-pantoate. ATP contacts are provided by residues valine 178 and 186–189 (LSSR).

It belongs to the pantothenate synthetase family. Homodimer.

Its subcellular location is the cytoplasm. The enzyme catalyses (R)-pantoate + beta-alanine + ATP = (R)-pantothenate + AMP + diphosphate + H(+). It participates in cofactor biosynthesis; (R)-pantothenate biosynthesis; (R)-pantothenate from (R)-pantoate and beta-alanine: step 1/1. Functionally, catalyzes the condensation of pantoate with beta-alanine in an ATP-dependent reaction via a pantoyl-adenylate intermediate. This is Pantothenate synthetase from Aeromonas salmonicida (strain A449).